The sequence spans 192 residues: Cytochrome b-245 light chain (192 aa).

Residues 2–7 (GQIEWA) lie on the Cytoplasmic side of the membrane. The helical transmembrane segment at 8-30 (MWANEQALASGLILMTGGIVATA) threads the bilayer. Residues 31-35 (GQFTQ) lie on the Extracellular side of the membrane. The helical transmembrane segment at 36-53 (WYLGTYSIAAGVLVCLLE) threads the bilayer. At 54–69 (YPRGRRTKGSTMERCE) the chain is on the cytoplasmic side. The stretch at 70–80 (QKYMTKVVKAF) is an intramembrane region. The Cytoplasmic segment spans residues 81–86 (GPLSRN). A helical transmembrane segment spans residues 87-104 (YYIRAFLHLGLSVPAGFL). Position 105 (Leu-105) is a topological domain, extracellular. Residues 106–126 (ATILGTACLAIASGIYLLAAI) traverse the membrane as a helical segment. Topologically, residues 127-192 (RGEQWTPIEP…TPCPVTDEVV (66 aa)) are cytoplasmic. Positions 134 to 192 (IEPKPKERPQVGGTIKQPPSNPPPRPPPEARKKPGEEAVAGVPRGAPRKTPCPVTDEVV) are disordered. The residue at position 147 (Thr-147) is a Phosphothreonine. Residue Lys-149 forms a Glycyl lysine isopeptide (Lys-Gly) (interchain with G-Cter in ubiquitin) linkage.

This sequence belongs to the p22phox family. As to quaternary structure, component of the phagocyte NADPH oxidase core complex/cytochrome b558 complex, composed of CYBB (heavy chain (beta)) and CYBA (light chain (alpha)). Component of the phagocyte NADPH oxidase complex composed of an obligatory core heterodimer formed by the membrane proteins CYBA and CYBB and the cytosolic regulatory subunits NCF1/p47-phox, NCF2/p67-phox, NCF4/p40-phox and the small GTPase RAC1 or RAC2. Interacts with NCF1 (via SH3 domain). Interacts with SH3PXD2A. Interacts with DUOX1, DUOX2 and TPO. Interacts with NOX4; this interaction mediates superoxide generation. Interacts with calprotectin (S100A8/9). Interacts with GBP7. Interacts with NOXO1. Forms a heterodimer with NOX3 and is essential for activity and cell membrane localization of NOX3. Interacts with NOX1. Post-translationally, phosphorylation at Thr-147 enhances NADPH oxidase activity by promoting NCF1/p47-phox binding. In terms of processing, ubiquitinated at Lys-149 likely by RNF145.

It localises to the cell membrane. Functionally, subunit of NADPH oxidase complexes that is required for the NADPH oxidase activity that generates, in various cell types, superoxide from molecular oxygen utilizing NADPH as an electron donor. Subunit of the phagocyte NADPH oxidase complex that mediates the transfer of electrons from cytosolic NADPH to O2 to produce the superoxide anion (O2(-)). In the activated complex, electrons are first transferred from NADPH to flavin adenine dinucleotide (FAD) and subsequently transferred via two heme molecules to molecular oxygen, producing superoxide through an outer-sphere reaction. Activation of the NADPH oxidase complex is initiated by the assembly of cytosolic subunits of the NADPH oxidase complex with the core NADPH oxidase complex to form a complex at the plasma membrane or phagosomal membrane. This activation process is initiated by phosphorylation dependent binding of the cytosolic NCF1/p47-phox subunit to the C-terminus of CYBA/p22-phox. Aassociates with NOX3 to form a functional NADPH oxidase constitutively generating superoxide. The protein is Cytochrome b-245 light chain of Sus scrofa (Pig).